We begin with the raw amino-acid sequence, 84 residues long: Small ribosomal subunit protein uS15 (84 aa).

The protein belongs to the universal ribosomal protein uS15 family. In terms of assembly, part of the 30S ribosomal subunit. Forms a bridge to the 50S subunit in the 70S ribosome, contacting the 23S rRNA.

In terms of biological role, one of the primary rRNA binding proteins, it binds directly to 16S rRNA where it helps nucleate assembly of the platform of the 30S subunit by binding and bridging several RNA helices of the 16S rRNA. Forms an intersubunit bridge (bridge B4) with the 23S rRNA of the 50S subunit in the ribosome. This is Small ribosomal subunit protein uS15 from Thermosipho africanus (strain TCF52B).